Consider the following 830-residue polypeptide: GPI ethanolamine phosphate transferase 2 (830 aa).

A signal peptide spans 1-32 (MNLKQFTCLSCAQLLAILLFIFAFFPRKIVLT). The Lumenal segment spans residues 33-321 (GISKQDPDQD…QYLETVQQID (289 aa)). N-linked (GlcNAc...) asparagine glycans are attached at residues Asn145, Asn185, and Asn298. Residues 322 to 342 (IVPTIAALFGMPIPMNSVGII) form a helical membrane-spanning segment. Residues 343 to 405 (IPDFLQLLPN…TKSATNYNYP (63 aa)) are Cytoplasmic-facing. Residues 406 to 426 (LLTLAFVGFLIITIIAIYVLL) traverse the membrane as a helical segment. Topologically, residues 427–439 (RYSGPDFWQLRVS) are lumenal. The helical transmembrane segment at 440–460 (SLSVLLVSIILGVSTFASSFI) threads the bilayer. At 461–469 (EEEHQLWWW) the chain is on the cytoplasmic side. A helical membrane pass occupies residues 470 to 490 (IVTAFSAVPLFVYRLNVLIIV). At 491–533 (RWFIMMACVRSIKFWNNSGQKFIYSNVMSNLLNQNPSWKWCLN) the chain is on the lumenal side. N-linked (GlcNAc...) asparagine glycosylation occurs at Asn506. The chain crosses the membrane as a helical span at residues 534–554 (MLTFLVLIMASAGFQVLHFIV). At 555–598 (TTILVGLCFTYKISWEIVNGNQAEIPLFMHDLLAKIDFAPTESN) the chain is on the cytoplasmic side. Residues 599–619 (LIVLARVFFQAWAIVVISRLV) traverse the membrane as a helical segment. Residues 620–651 (LTKLKVLNKNYLIKDMKVYITILLMFQTSSQN) are Lumenal-facing. The chain crosses the membrane as a helical span at residues 652–672 (IGQFLVFQILESQIFYFFQNI). Residues 673 to 682 (PTASLTSTSK) are Cytoplasmic-facing. A helical membrane pass occupies residues 683 to 703 (IYFSNLVSLILQNFTFFQFGG). Residues 704–724 (TNSISTIDLGNAYHGVSSDYN) lie on the Lumenal side of the membrane. The chain crosses the membrane as a helical span at residues 725–745 (IYVVGILMSVANFAPAIYWSM). Over 746–768 (LPWSINYASIPAQVKLQTFIRSK) the chain is Cytoplasmic. A helical membrane pass occupies residues 769 to 789 (LPAFTYHCIFGTCLMTACVVL). Residues 790-805 (RFHLFIWSVFSPKLCY) lie on the Lumenal side of the membrane. The chain crosses the membrane as a helical span at residues 806–826 (FLGWNFVMGLLNGWLPELALL). Topologically, residues 827–830 (CALD) are cytoplasmic.

This sequence belongs to the PIGG/PIGN/PIGO family. PIGG subfamily. In terms of processing, N-glycosylated.

Its subcellular location is the endoplasmic reticulum membrane. It participates in glycolipid biosynthesis; glycosylphosphatidylinositol-anchor biosynthesis. Its function is as follows. Ethanolamine phosphate transferase involved in glycosylphosphatidylinositol-anchor biosynthesis. Transfers ethanolamine phosphate to the GPI second mannose. Although not essential, addition of ethanolamine phosphate to the second mannose plays an important role in cell separation via the GPI-based modification of daughter-specific proteins. This Saccharomyces cerevisiae (strain ATCC 204508 / S288c) (Baker's yeast) protein is GPI ethanolamine phosphate transferase 2 (LAS21).